We begin with the raw amino-acid sequence, 349 residues long: 4-hydroxythreonine-4-phosphate dehydrogenase (349 aa).

A substrate-binding site is contributed by Thr135. A divalent metal cation-binding residues include His170, His215, and His276. Substrate contacts are provided by Lys284, Asn293, and Arg302.

It belongs to the PdxA family. As to quaternary structure, homodimer. A divalent metal cation serves as cofactor.

It localises to the cytoplasm. The enzyme catalyses 4-(phosphooxy)-L-threonine + NAD(+) = 3-amino-2-oxopropyl phosphate + CO2 + NADH. It participates in cofactor biosynthesis; pyridoxine 5'-phosphate biosynthesis; pyridoxine 5'-phosphate from D-erythrose 4-phosphate: step 4/5. In terms of biological role, catalyzes the NAD(P)-dependent oxidation of 4-(phosphooxy)-L-threonine (HTP) into 2-amino-3-oxo-4-(phosphooxy)butyric acid which spontaneously decarboxylates to form 3-amino-2-oxopropyl phosphate (AHAP). The chain is 4-hydroxythreonine-4-phosphate dehydrogenase from Synechococcus sp. (strain JA-3-3Ab) (Cyanobacteria bacterium Yellowstone A-Prime).